The following is a 513-amino-acid chain: Lysine--tRNA ligase (513 aa).

Residues Glu-423 and Glu-430 each contribute to the Mg(2+) site.

It belongs to the class-II aminoacyl-tRNA synthetase family. Homodimer. Mg(2+) serves as cofactor.

It localises to the cytoplasm. It catalyses the reaction tRNA(Lys) + L-lysine + ATP = L-lysyl-tRNA(Lys) + AMP + diphosphate. In Anaeromyxobacter dehalogenans (strain 2CP-1 / ATCC BAA-258), this protein is Lysine--tRNA ligase.